We begin with the raw amino-acid sequence, 307 residues long: Protease HtpX homolog (307 aa).

Helical transmembrane passes span 10 to 30 (VITI…AYGL) and 40 to 60 (ISII…QWLV). A Zn(2+)-binding site is contributed by histidine 144. Glutamate 145 is an active-site residue. Histidine 148 contributes to the Zn(2+) binding site. 2 helical membrane-spanning segments follow: residues 156–176 (LLLA…SMIF) and 187–207 (FFLV…MILG). Glutamate 213 contacts Zn(2+).

It belongs to the peptidase M48B family. Requires Zn(2+) as cofactor.

Its subcellular location is the cell membrane. This is Protease HtpX homolog from Picrophilus torridus (strain ATCC 700027 / DSM 9790 / JCM 10055 / NBRC 100828 / KAW 2/3).